The following is a 146-amino-acid chain: D-aminoacyl-tRNA deacylase (146 aa).

The short motif at 138 to 139 is the Gly-cisPro motif, important for rejection of L-amino acids element; it reads GP.

Belongs to the DTD family. In terms of assembly, homodimer.

The protein localises to the cytoplasm. It catalyses the reaction glycyl-tRNA(Ala) + H2O = tRNA(Ala) + glycine + H(+). The catalysed reaction is a D-aminoacyl-tRNA + H2O = a tRNA + a D-alpha-amino acid + H(+). Its function is as follows. An aminoacyl-tRNA editing enzyme that deacylates mischarged D-aminoacyl-tRNAs. Also deacylates mischarged glycyl-tRNA(Ala), protecting cells against glycine mischarging by AlaRS. Acts via tRNA-based rather than protein-based catalysis; rejects L-amino acids rather than detecting D-amino acids in the active site. By recycling D-aminoacyl-tRNA to D-amino acids and free tRNA molecules, this enzyme counteracts the toxicity associated with the formation of D-aminoacyl-tRNA entities in vivo and helps enforce protein L-homochirality. In Xanthomonas axonopodis pv. citri (strain 306), this protein is D-aminoacyl-tRNA deacylase.